Consider the following 285-residue polypeptide: Putative quercetin 2,3-dioxygenase PA3240 (285 aa).

Residues histidine 60, histidine 62, histidine 104, and glutamate 106 each contribute to the a divalent metal cation site.

This sequence belongs to the pirin family. Requires a divalent metal cation as cofactor.

It catalyses the reaction quercetin + O2 = 2-(3,4-dihydroxybenzoyloxy)-4,6-dihydroxybenzoate + CO. It participates in flavonoid metabolism; quercetin degradation. Putative quercetin 2,3-dioxygenase. This Pseudomonas aeruginosa (strain ATCC 15692 / DSM 22644 / CIP 104116 / JCM 14847 / LMG 12228 / 1C / PRS 101 / PAO1) protein is Putative quercetin 2,3-dioxygenase PA3240.